Reading from the N-terminus, the 361-residue chain is 3-isopropylmalate dehydrogenase (361 aa).

Residue 78–91 (GTQWDSLPRHLRPE) coordinates NAD(+). Residues Arg98, Arg108, Arg136, and Asp226 each contribute to the substrate site. Mg(2+) contacts are provided by Asp226, Asp250, and Asp254. Position 284 to 296 (284 to 296 (GSAPDIAGQDKAN)) interacts with NAD(+).

Belongs to the isocitrate and isopropylmalate dehydrogenases family. LeuB type 1 subfamily. Homodimer. Mg(2+) is required as a cofactor. Requires Mn(2+) as cofactor.

Its subcellular location is the cytoplasm. The enzyme catalyses (2R,3S)-3-isopropylmalate + NAD(+) = 4-methyl-2-oxopentanoate + CO2 + NADH. The protein operates within amino-acid biosynthesis; L-leucine biosynthesis; L-leucine from 3-methyl-2-oxobutanoate: step 3/4. Its function is as follows. Catalyzes the oxidation of 3-carboxy-2-hydroxy-4-methylpentanoate (3-isopropylmalate) to 3-carboxy-4-methyl-2-oxopentanoate. The product decarboxylates to 4-methyl-2 oxopentanoate. This chain is 3-isopropylmalate dehydrogenase, found in Thermosynechococcus vestitus (strain NIES-2133 / IAM M-273 / BP-1).